A 314-amino-acid polypeptide reads, in one-letter code: Olfactory receptor 1E1 (314 aa).

Residues 1-25 (MMGQNQTSISDFLLLGLPIQPEQQN) are Extracellular-facing. N-linked (GlcNAc...) asparagine glycosylation is present at asparagine 5. A helical membrane pass occupies residues 26–49 (LCYALFLAMYLTTLLGNLLIIVLI). At 50–57 (RLDSHLHT) the chain is on the cytoplasmic side. Residues 58-79 (PMYLFLSNLSFSDLCFSSVTIP) form a helical membrane-spanning segment. At 80–100 (KLLQNMQNQDPSIPYADCLTQ) the chain is on the extracellular side. Residues cysteine 97 and cysteine 189 are joined by a disulfide bond. The helical transmembrane segment at 101-120 (MYFFLLFGDLESFLLVAMAY) threads the bilayer. The Cytoplasmic portion of the chain corresponds to 121–139 (DRYVAICFALHYTAIMSPM). A helical transmembrane segment spans residues 140–158 (LCLSLVALSWVLTTFHAML). Over 159–195 (HTLLMARLCFCADNVIPHFFCDMSALLKLACSDTRVN) the chain is Extracellular. A helical membrane pass occupies residues 196–219 (EWVIFIMGGLIVVIPFLLILGSYA). Over 220–236 (RIVSSILKVPSSKGICK) the chain is Cytoplasmic. Residues 237–259 (AFSTCGSHLSVVSLFYGTVIGLY) traverse the membrane as a helical segment. The Extracellular portion of the chain corresponds to 260-272 (LCPSANSSTLKET). A helical transmembrane segment spans residues 273–292 (VMAMMYTVVTPMLNPFIYSL). The Cytoplasmic portion of the chain corresponds to 293–314 (RNGDMKGALSRVIHQKKTFFSL).

Belongs to the G-protein coupled receptor 1 family.

The protein localises to the cell membrane. Odorant receptor. This Gorilla gorilla gorilla (Western lowland gorilla) protein is Olfactory receptor 1E1 (OR1E1).